Consider the following 138-residue polypeptide: Cysteine desulfuration protein SufE (138 aa).

The active-site Cysteine persulfide intermediate is the C51.

It belongs to the SufE family. In terms of assembly, homodimer. Interacts with SufS.

The protein localises to the cytoplasm. It functions in the pathway cofactor biosynthesis; iron-sulfur cluster biosynthesis. Its function is as follows. Participates in cysteine desulfuration mediated by SufS. Cysteine desulfuration mobilizes sulfur from L-cysteine to yield L-alanine and constitutes an essential step in sulfur metabolism for biosynthesis of a variety of sulfur-containing biomolecules. Functions as a sulfur acceptor for SufS, by mediating the direct transfer of the sulfur atom from the S-sulfanylcysteine of SufS, an intermediate product of cysteine desulfuration process. The sequence is that of Cysteine desulfuration protein SufE from Shigella boydii serotype 18 (strain CDC 3083-94 / BS512).